A 1055-amino-acid polypeptide reads, in one-letter code: Cellulose synthase A catalytic subunit 9 [UDP-forming] (1055 aa).

Topologically, residues 1 to 268 are cytoplasmic; sequence MEASAGLVAG…ASSKVNPYRM (268 aa). 8 residues coordinate Zn(2+): Cys-37, Cys-40, Cys-56, Cys-59, Cys-64, Cys-67, Cys-79, and Cys-82. The RING-type; degenerate zinc-finger motif lies at 37–83; sequence CEICGDEVGRTVDGDLFVACNECGFPVCRPCYEYERREGTQNCPQCK. A helical transmembrane segment spans residues 269 to 289; it reads VIILRLVVLGFFLRYRILHPV. Topologically, residues 290–291 are extracellular; it reads PD. The chain crosses the membrane as a helical span at residues 292–312; sequence AIPLWLTSIICEIWFAVSWIL. Topologically, residues 313 to 831 are cytoplasmic; sequence DQFPKWYPID…LERFSYINTT (519 aa). Ser-351, Lys-357, Glu-358, and Asp-387 together coordinate UDP-alpha-D-glucose. Asp-387 is an active-site residue. Residues 439–468 adopt a coiled-coil conformation; the sequence is NFVQERRAMKREYEEFKVRINALVAKAQKV. Position 528 (Lys-528) interacts with UDP-alpha-D-glucose. The Mn(2+) site is built by Lys-529 and Asp-553. The active site involves Asp-753. Residues 832 to 852 traverse the membrane as a helical segment; it reads IYPFTSLPLLAYCTLPAVCLL. Residues 853-860 lie on the Extracellular side of the membrane; the sequence is TGKFIMPP. Residues 861 to 881 form a helical membrane-spanning segment; sequence ISTFASLFFIALFISIFATGI. The Cytoplasmic segment spans residues 882-899; that stretch reads LEMRWSGVSIEEWWRNEQ. A helical membrane pass occupies residues 900–920; that stretch reads FWVIGGVSAHLFAVVQGLLKV. The Extracellular portion of the chain corresponds to 921–951; it reads LAGIDTNFTVTSKATGDEDDEFAELYAFKWT. A glycan (N-linked (GlcNAc...) asparagine) is linked at Asn-927. A helical transmembrane segment spans residues 952-972; the sequence is TLLIPPTTLLILNIIGVVAGV. Topologically, residues 973-983 are cytoplasmic; it reads SDAINNGSEAW. Residues 984 to 1004 traverse the membrane as a helical segment; that stretch reads GPLFGKLFFAFWVIVHLYPFL. Residues 1005-1013 lie on the Extracellular side of the membrane; it reads KGLMGRQNR. A helical transmembrane segment spans residues 1014–1034; the sequence is TPTIVVIWSVLLASIFSLLWV. At 1035–1055 the chain is on the cytoplasmic side; it reads RIDPFTIKARGPDVRQCGINC.

Belongs to the glycosyltransferase 2 family. Plant cellulose synthase subfamily. It depends on Mn(2+) as a cofactor. The cofactor is Zn(2+).

It localises to the cell membrane. The catalysed reaction is [(1-&gt;4)-beta-D-glucosyl](n) + UDP-alpha-D-glucose = [(1-&gt;4)-beta-D-glucosyl](n+1) + UDP + H(+). The protein operates within glycan metabolism; plant cellulose biosynthesis. Catalytic subunit of cellulose synthase terminal complexes ('rosettes'), required for beta-1,4-glucan microfibril crystallization, a major mechanism of the cell wall formation. Involved in the secondary cell wall formation. The polypeptide is Cellulose synthase A catalytic subunit 9 [UDP-forming] (CESA9) (Oryza sativa subsp. indica (Rice)).